We begin with the raw amino-acid sequence, 617 residues long: Probable endochitinase (617 aa).

Residues 53–426 (YIRPCYFTNW…SVIAKELGGV (374 aa)) form the GH18 domain. Cysteines 57 and 82 form a disulfide. Residues 109 to 110 (DW) and 136 to 139 (GGWS) each bind chitin. The active-site Proton donor is Glu179. Chitin contacts are provided by residues Tyr180 and 245–248 (MSYD). N-linked (GlcNAc...) asparagine glycosylation is present at Asn310. Residue Trp394 coordinates chitin. Chitin-binding type-2 domains follow at residues 478–534 (TNVC…GCSV) and 563–617 (AFKC…KCAK). Disulfide bonds link Cys511–Cys524 and Cys594–Cys607.

Belongs to the glycosyl hydrolase 18 family. Chitinase class II subfamily.

The enzyme catalyses Random endo-hydrolysis of N-acetyl-beta-D-glucosaminide (1-&gt;4)-beta-linkages in chitin and chitodextrins.. This chain is Probable endochitinase (cht-1), found in Caenorhabditis elegans.